The chain runs to 221 residues: Pre-rRNA-processing protein SRD1 (221 aa).

Polar residues predominate over residues 101 to 110; it reads SKNRVTSACN. Disordered regions lie at residues 101–121 and 137–161; these read SKNR…QEAN and ASIT…TILP. Residues 142–155 show a composition bias toward basic residues; sequence KYSKKTTSRPKREK. Residues 168-193 form a GATA-type zinc finger; sequence CSKCKDTWTIQWRSGPDQNRELCSPC. A disordered region spans residues 201 to 221; sequence LKKENEKKRQAADKRIDRNNP. Residues 203–221 show a composition bias toward basic and acidic residues; that stretch reads KENEKKRQAADKRIDRNNP.

Its subcellular location is the cytoplasm. The protein localises to the nucleus. Functionally, plays a direct or indirect role in pre-rRNA processing. This is Pre-rRNA-processing protein SRD1 (SRD1) from Saccharomyces cerevisiae (strain ATCC 204508 / S288c) (Baker's yeast).